Reading from the N-terminus, the 235-residue chain is Ribonuclease 3 (235 aa).

The 126-residue stretch at 6–131 (IDQLERLTEH…LIAVMYLDGG (126 aa)) folds into the RNase III domain. Residue Glu-44 coordinates Mg(2+). Residue Asp-48 is part of the active site. Mg(2+)-binding residues include Asp-117 and Glu-120. Glu-120 is an active-site residue. A DRBM domain is found at 156–225 (DAKTELQEWA…AEKVLRREGI (70 aa)).

Belongs to the ribonuclease III family. As to quaternary structure, homodimer. Mg(2+) is required as a cofactor.

The protein localises to the cytoplasm. The enzyme catalyses Endonucleolytic cleavage to 5'-phosphomonoester.. Digests double-stranded RNA. Involved in the processing of primary rRNA transcript to yield the immediate precursors to the large and small rRNAs (23S and 16S). Processes some mRNAs, and tRNAs when they are encoded in the rRNA operon. Processes pre-crRNA and tracrRNA of type II CRISPR loci if present in the organism. This is Ribonuclease 3 from Bartonella quintana (strain Toulouse) (Rochalimaea quintana).